A 393-amino-acid polypeptide reads, in one-letter code: Riboflavin biosynthesis protein RibBA (393 aa).

Residues 1-200 are DHBP synthase; the sequence is MQFDNIDSAL…IDDLIEYRKK (200 aa). D-ribulose 5-phosphate contacts are provided by residues 27-28, D32, 139-143, and E163; these read RE and RNGHT. E28 is a Mg(2+) binding site. H142 provides a ligand contact to Mg(2+). The segment at 201 to 393 is GTP cyclohydrolase II; sequence LEPEIEFKAK…TKKIKMGHLI (193 aa). Residue 249-253 participates in GTP binding; the sequence is RLHSA. The Zn(2+) site is built by C254, C265, and C267. GTP-binding positions include Q270, 291 to 293, and T313; that span reads EGR. The active-site Proton acceptor; for GTP cyclohydrolase activity is D325. Catalysis depends on R327, which acts as the Nucleophile; for GTP cyclohydrolase activity. Residues S348 and K353 each coordinate GTP.

This sequence in the N-terminal section; belongs to the DHBP synthase family. The protein in the C-terminal section; belongs to the GTP cyclohydrolase II family. It depends on Mg(2+) as a cofactor. Requires Mn(2+) as cofactor. Zn(2+) serves as cofactor.

The enzyme catalyses D-ribulose 5-phosphate = (2S)-2-hydroxy-3-oxobutyl phosphate + formate + H(+). The catalysed reaction is GTP + 4 H2O = 2,5-diamino-6-hydroxy-4-(5-phosphoribosylamino)-pyrimidine + formate + 2 phosphate + 3 H(+). It participates in cofactor biosynthesis; riboflavin biosynthesis; 2-hydroxy-3-oxobutyl phosphate from D-ribulose 5-phosphate: step 1/1. The protein operates within cofactor biosynthesis; riboflavin biosynthesis; 5-amino-6-(D-ribitylamino)uracil from GTP: step 1/4. Functionally, catalyzes the conversion of D-ribulose 5-phosphate to formate and 3,4-dihydroxy-2-butanone 4-phosphate. Its function is as follows. Catalyzes the conversion of GTP to 2,5-diamino-6-ribosylamino-4(3H)-pyrimidinone 5'-phosphate (DARP), formate and pyrophosphate. This chain is Riboflavin biosynthesis protein RibBA, found in Staphylococcus aureus (strain MSSA476).